A 70-amino-acid polypeptide reads, in one-letter code: MSSPHQDSLLPRFAQGEEGHETTTKFPCLVCVDRVSHTVDIHLSDTKIAVRDSLQRRTQGGGGFHGLRIR.

The disordered stretch occupies residues 1–21; that stretch reads MSSPHQDSLLPRFAQGEEGHE.

This Escherichia coli protein is Protein FlmC homolog.